Here is a 431-residue protein sequence, read N- to C-terminus: Serine/threonine-protein kinase Sgk1 (431 aa).

Residues leucine 58–alanine 93 are disordered. Residues glutamine 81 to alanine 93 show a composition bias toward polar residues. The 258-residue stretch at phenylalanine 98–phenylalanine 355 folds into the Protein kinase domain. ATP contacts are provided by residues isoleucine 104–valine 112 and lysine 127. The Proton acceptor role is filled by aspartate 222. Positions serine 356 to leucine 431 constitute an AGC-kinase C-terminal domain.

Belongs to the protein kinase superfamily. AGC Ser/Thr protein kinase family.

The protein localises to the cytoplasm. The protein resides in the nucleus. Its subcellular location is the endoplasmic reticulum. It catalyses the reaction L-seryl-[protein] + ATP = O-phospho-L-seryl-[protein] + ADP + H(+). The catalysed reaction is L-threonyl-[protein] + ATP = O-phospho-L-threonyl-[protein] + ADP + H(+). In terms of biological role, protein kinase that may play an important role in cellular stress response. May be involved in the regulation of processes such as cell survival, neuronal excitability and renal sodium excretion. In Fundulus heteroclitus (Killifish), this protein is Serine/threonine-protein kinase Sgk1 (sgk1).